Reading from the N-terminus, the 401-residue chain is Argininosuccinate synthase (401 aa).

8–16 provides a ligand contact to ATP; it reads AYSGGLDTS. Position 86 (Tyr-86) interacts with L-citrulline. Gly-116 serves as a coordination point for ATP. L-aspartate is bound by residues Thr-118, Asn-122, and Asp-123. Residue Asn-122 coordinates L-citrulline. L-citrulline contacts are provided by Arg-126, Ser-174, Glu-258, and Tyr-270.

It belongs to the argininosuccinate synthase family. Type 1 subfamily. As to quaternary structure, homotetramer.

It localises to the cytoplasm. It catalyses the reaction L-citrulline + L-aspartate + ATP = 2-(N(omega)-L-arginino)succinate + AMP + diphosphate + H(+). Its pathway is amino-acid biosynthesis; L-arginine biosynthesis; L-arginine from L-ornithine and carbamoyl phosphate: step 2/3. In Acidothermus cellulolyticus (strain ATCC 43068 / DSM 8971 / 11B), this protein is Argininosuccinate synthase.